Here is a 659-residue protein sequence, read N- to C-terminus: Anoctamin-10 (659 aa).

Residues 1–207 (MRVTLSTLDT…DSIRSYFGET (207 aa)) are Cytoplasmic-facing. The helical transmembrane segment at 208–228 (IALYFGFLEYFTFALIPMAII) threads the bilayer. Residues 229–240 (GLPYYLFVWEDY) are Extracellular-facing. A helical membrane pass occupies residues 241–261 (DKYVIFASFNLIWSTVILEVW). Topologically, residues 262–316 (KRGCANMTYRWGTLVMKRQFEEPRPGFHGVLGINSVTGREEPLYSSYKRQLRIYL) are cytoplasmic. Residues 317–337 (VSLPFVCLCLYFSLYVMMIYF) traverse the membrane as a helical segment. Over 338–352 (DMEDWALSLHEDSGS) the chain is Extracellular. Residues 353–373 (EWTSLLLYVPSIVYAVVIEIM) traverse the membrane as a helical segment. Residues 374–400 (NRLYRYAAEFLTSWENHRLESAYQNHL) are Cytoplasmic-facing. A helical membrane pass occupies residues 401–421 (VLKVLVFNFLNCFASLFYIAF). Topologically, residues 422–500 (VLKDMKLLRQ…YLGTFDDYLE (79 aa)) are extracellular. The chain crosses the membrane as a helical span at residues 501 to 521 (LFLQFGYVSLFSCVYPLAAAF). Topologically, residues 522 to 553 (AVLNNFTEVNSDALKMCRVFKRPFAEPSASIG) are cytoplasmic. A helical transmembrane segment spans residues 554 to 574 (VWQLAFETMSVISVVTNCALI). Residues 575–590 (GMSPQVNAVFPESKTD) lie on the Extracellular side of the membrane. The helical transmembrane segment at 591–611 (LVLIVVAVEHALLALKFILAF) threads the bilayer. Residues 612–659 (AIPDKPRHIQQKLARLEFESLEALKQQQMKLVAENLKEEYQEDGKEAT) are Cytoplasmic-facing.

It belongs to the anoctamin family. As to expression, predominant expression seen in epithelial tissues.

The protein localises to the cell membrane. Its function is as follows. Does not exhibit calcium-activated chloride channel (CaCC) activity. Can inhibit the activity of ANO1. This is Anoctamin-10 (Ano10) from Mus musculus (Mouse).